The sequence spans 483 residues: Sphingomyelin synthase-related 1 (483 aa).

The next 3 membrane-spanning stretches (helical) occupy residues 182-202, 230-250, and 261-281; these read LIAFAYSSLSFLMTSFVMVLV, FDMCETIGLVLAVVWFTVLFF, and MFSLLGTVFLLRCFTMLITSL. His-330 is an active-site residue. Residues 349-369 traverse the membrane as a helical segment; that stretch reads WTGLHTFTWVLNCFAIFLILA. Active-site residues include His-373 and Asp-377. Residues 376–396 form a helical membrane-spanning segment; it reads IDVFIAFYISSRMFLYYHAYA. Over 397 to 483 the chain is Cytoplasmic; that stretch reads YNHAGITATD…NSKNHTKKHN (87 aa). Positions 450–461 are enriched in basic and acidic residues; sequence EPKITPKSDSSR. The tract at residues 450–483 is disordered; sequence EPKITPKSDSSRKRSSVVAAKQNGNSKNHTKKHN.

The protein belongs to the sphingomyelin synthase family.

The protein resides in the membrane. In Caenorhabditis elegans, this protein is Sphingomyelin synthase-related 1.